Reading from the N-terminus, the 231-residue chain is MSERDSGSSGRAKAKRQPGAKAPFGPFVRKPVEKVEANAAAAQKARAESAESWPDDAVEVGAIVDAYGLKGWVKVAAHADAGHGGDALLSTKRWWLEKGRERQSTPCLQSKVHGDSIVAQLGGTADRDAALALRGHRVYVRRRDFPALGTDEYYWVDLVGLDVVNEAGIELGKVADLIDNGAQSVLRIEYPAIGKDGKPVIGERLIPFVGVYVKTVDQAAKKIIVDWEADY.

The interval 1-29 is disordered; sequence MSERDSGSSGRAKAKRQPGAKAPFGPFVR. In terms of domain architecture, PRC barrel spans 150–231; the sequence is TDEYYWVDLV…KIIVDWEADY (82 aa).

This sequence belongs to the RimM family. As to quaternary structure, binds ribosomal protein uS19.

The protein localises to the cytoplasm. An accessory protein needed during the final step in the assembly of 30S ribosomal subunit, possibly for assembly of the head region. Essential for efficient processing of 16S rRNA. May be needed both before and after RbfA during the maturation of 16S rRNA. It has affinity for free ribosomal 30S subunits but not for 70S ribosomes. The chain is Ribosome maturation factor RimM from Paraburkholderia phymatum (strain DSM 17167 / CIP 108236 / LMG 21445 / STM815) (Burkholderia phymatum).